Here is a 398-residue protein sequence, read N- to C-terminus: Metal tolerance protein 1 (398 aa).

Topologically, residues 1 to 56 (MESSSPHHSHIVEVNVGKSDEERIIVASKVCGEAPCGFSDSKNASGDAHERSASMR) are cytoplasmic. The helical transmembrane segment at 57-77 (KLCIAVVLCLVFMSVEVVGGI) threads the bilayer. The Vacuolar segment spans residues 78 to 89 (KANSLAILTDAA). A helical membrane pass occupies residues 90-110 (HLLSDVAAFAISLFSLWAAGW). Over 111–122 (EATPRQTYGFFR) the chain is Cytoplasmic. Residues 123–143 (IEILGALVSIQLIWLLTGILV) traverse the membrane as a helical segment. Residues 144–159 (YEAIIRIVTETSEVNG) are Vacuolar-facing. Residues 160-180 (FLMFLVAAFGLVVNIIMAVLL) form a helical membrane-spanning segment. Over 181–263 (GHDHGHSHGH…KRNINLQGAY (83 aa)) the chain is Cytoplasmic. The tract at residues 182–232 (HDHGHSHGHGHGHGHDHHNHSHGVTVTTHHHHHDHEHGHSHGHGEDKHHAH) is required for zinc-binding. The disordered stretch occupies residues 186-232 (HSHGHGHGHGHDHHNHSHGVTVTTHHHHHDHEHGHSHGHGEDKHHAH). The span at 187–202 (SHGHGHGHGHDHHNHS) shows a compositional bias: basic residues. The segment covering 216–232 (HEHGHSHGHGEDKHHAH) has biased composition (basic and acidic residues). The chain crosses the membrane as a helical span at residues 264–284 (LHVLGDSIQSVGVMIGGAIIW). Residues 285-290 (YNPEWK) lie on the Vacuolar side of the membrane. A helical membrane pass occupies residues 291–311 (IVDLICTLAFSVIVLGTTINM). At 312–398 (IRNILEVLME…ISHVTIQIER (87 aa)) the chain is on the cytoplasmic side.

It belongs to the cation diffusion facilitator (CDF) transporter (TC 2.A.4) family. SLC30A subfamily. Ubiquitously expressed at low levels.

It localises to the vacuole membrane. Its function is as follows. Mediates zinc accumulation in roots and confers resistance to zinc. Involved in sequestration of excess zinc in the cytoplasm into vacuoles to maintain zinc homeostasis. Can also transport cadmium with a low efficiency. This is Metal tolerance protein 1 from Arabidopsis thaliana (Mouse-ear cress).